The sequence spans 622 residues: DNA topoisomerase 3 (622 aa).

Residues 2–148 (RVLCVAEKNS…SIQVIRADFN (147 aa)) enclose the Toprim domain. In terms of domain architecture, Topo IA-type catalytic spans 166–596 (SKNAADAVDA…MILTQFRDVF (431 aa)). The active-site O-(5'-phospho-DNA)-tyrosine intermediate is the Tyr330.

It belongs to the type IA topoisomerase family. In terms of assembly, interacts with hus2.

It catalyses the reaction ATP-independent breakage of single-stranded DNA, followed by passage and rejoining.. Its function is as follows. Releases the supercoiling and torsional tension of DNA introduced during the DNA replication and transcription by transiently cleaving and rejoining one strand of the DNA duplex. Introduces a single-strand break via transesterification at a target site in duplex DNA. The scissile phosphodiester is attacked by the catalytic tyrosine of the enzyme, resulting in the formation of a DNA-(5'-phosphotyrosyl)-enzyme intermediate and the expulsion of a 3'-OH DNA strand. The free DNA strand than undergoes passage around the unbroken strand thus removing DNA supercoils. Finally, in the religation step, the DNA 3'-OH attacks the covalent intermediate to expel the active-site tyrosine and restore the DNA phosphodiester backbone. In Schizosaccharomyces pombe (strain 972 / ATCC 24843) (Fission yeast), this protein is DNA topoisomerase 3 (top3).